The primary structure comprises 402 residues: Dihydrolipoyllysine-residue acetyltransferase component of pyruvate dehydrogenase complex (402 aa).

The Lipoyl-binding domain occupies 2–77 (ANEFKFTDVG…HIGQVMAVID (76 aa)). Position 43 is an N6-lipoyllysine (Lys43). Disordered stretches follow at residues 82–110 (AAAPAAPQPVSAPAPAPTPTFTPTPAPVT) and 143–172 (PQPTPAPVVQPTSAPTPTPAPASAAAPSGE). Composition is skewed to pro residues over residues 87-107 (APQPVSAPAPAPTPTFTPTPA) and 143-162 (PQPTPAPVVQPTSAPTPTPA). Residue His374 is part of the active site.

This sequence belongs to the 2-oxoacid dehydrogenase family. Forms a 24-polypeptide structural core with octahedral symmetry. It depends on (R)-lipoate as a cofactor.

It carries out the reaction N(6)-[(R)-dihydrolipoyl]-L-lysyl-[protein] + acetyl-CoA = N(6)-[(R)-S(8)-acetyldihydrolipoyl]-L-lysyl-[protein] + CoA. The pyruvate dehydrogenase complex catalyzes the overall conversion of pyruvate to acetyl-CoA and CO(2). It contains multiple copies of three enzymatic components: pyruvate dehydrogenase (E1), dihydrolipoamide acetyltransferase (E2) and lipoamide dehydrogenase (E3). The sequence is that of Dihydrolipoyllysine-residue acetyltransferase component of pyruvate dehydrogenase complex (pdhC) from Mycoplasma pneumoniae (strain ATCC 29342 / M129 / Subtype 1) (Mycoplasmoides pneumoniae).